The primary structure comprises 241 residues: Small ribosomal subunit protein uS2 (241 aa).

This sequence belongs to the universal ribosomal protein uS2 family.

The chain is Small ribosomal subunit protein uS2 from Citrobacter koseri (strain ATCC BAA-895 / CDC 4225-83 / SGSC4696).